Reading from the N-terminus, the 396-residue chain is Tyrosine--tRNA ligase (396 aa).

A 'HIGH' region motif is present at residues 43 to 52 (PSSPDIHLGH). The short motif at 227-231 (KMSKS) is the 'KMSKS' region element. K230 lines the ATP pocket. The region spanning 338-396 (TGVIDFIILSGLAKSKSEARRLLEQGAVEINSEKISDQNTPVKCGDIIKAGKRRYSKAI) is the S4 RNA-binding domain.

The protein belongs to the class-I aminoacyl-tRNA synthetase family. TyrS type 2 subfamily. Homodimer.

The protein resides in the cytoplasm. The catalysed reaction is tRNA(Tyr) + L-tyrosine + ATP = L-tyrosyl-tRNA(Tyr) + AMP + diphosphate + H(+). Catalyzes the attachment of tyrosine to tRNA(Tyr) in a two-step reaction: tyrosine is first activated by ATP to form Tyr-AMP and then transferred to the acceptor end of tRNA(Tyr). The polypeptide is Tyrosine--tRNA ligase (Dehalococcoides mccartyi (strain CBDB1)).